The sequence spans 1007 residues: Lysosomal alpha-mannosidase (1007 aa).

Composition is skewed to low complexity over residues methionine 1–valine 10 and alanine 19–alanine 28. The interval methionine 1–proline 30 is disordered. Positions methionine 1 to alanine 50 are cleaved as a signal peptide. 2 cysteine pairs are disulfide-bonded: cysteine 56–cysteine 360 and cysteine 269–cysteine 274. Zn(2+)-binding residues include histidine 73 and aspartate 75. Asparagine 134 carries N-linked (GlcNAc...) asparagine glycosylation. Residue aspartate 197 coordinates Zn(2+). Aspartate 197 acts as the Nucleophile in catalysis. Residues asparagine 311, asparagine 347, and asparagine 369 are each glycosylated (N-linked (GlcNAc...) asparagine). Intrachain disulfides connect cysteine 414-cysteine 474 and cysteine 495-cysteine 503. A Zn(2+)-binding site is contributed by histidine 448. Asparagine 499, asparagine 543, asparagine 643, asparagine 649, asparagine 690, asparagine 764, and asparagine 927 each carry an N-linked (GlcNAc...) asparagine glycan.

Belongs to the glycosyl hydrolase 38 family. It depends on Zn(2+) as a cofactor. Post-translationally, processed into 3 peptides of 72 kDa, 41 kDa and 12 kDa.

The protein resides in the lysosome. It carries out the reaction Hydrolysis of terminal, non-reducing alpha-D-mannose residues in alpha-D-mannosides.. Its function is as follows. Necessary for the catabolism of N-linked carbohydrates released during glycoprotein turnover. This Felis catus (Cat) protein is Lysosomal alpha-mannosidase (MAN2B1).